The chain runs to 292 residues: NAD kinase (292 aa).

The active-site Proton acceptor is the D73. Residues 73–74, 147–148, H158, R175, D177, 188–193, and Q247 each bind NAD(+); these read DG, NE, and TAYSLS.

Belongs to the NAD kinase family. It depends on a divalent metal cation as a cofactor.

It localises to the cytoplasm. It carries out the reaction NAD(+) + ATP = ADP + NADP(+) + H(+). Functionally, involved in the regulation of the intracellular balance of NAD and NADP, and is a key enzyme in the biosynthesis of NADP. Catalyzes specifically the phosphorylation on 2'-hydroxyl of the adenosine moiety of NAD to yield NADP. This is NAD kinase from Edwardsiella ictaluri (strain 93-146).